A 394-amino-acid chain; its full sequence is Dual-specificity RNA methyltransferase RlmN (394 aa).

Glu92 serves as the catalytic Proton acceptor. Residues 98–341 (ENDRGTLCIS…TTVRRTRGDD (244 aa)) enclose the Radical SAM core domain. The cysteines at positions 105 and 346 are disulfide-linked. Residues Cys112, Cys116, and Cys119 each contribute to the [4Fe-4S] cluster site. Residues 166-167 (GE), Ser198, 220-222 (SLH), and Asn303 contribute to the S-adenosyl-L-methionine site. Catalysis depends on Cys346, which acts as the S-methylcysteine intermediate. The disordered stretch occupies residues 374-394 (DSAVQRRADAAPSGSATETTR).

Belongs to the radical SAM superfamily. RlmN family. [4Fe-4S] cluster serves as cofactor.

The protein resides in the cytoplasm. It catalyses the reaction adenosine(2503) in 23S rRNA + 2 reduced [2Fe-2S]-[ferredoxin] + 2 S-adenosyl-L-methionine = 2-methyladenosine(2503) in 23S rRNA + 5'-deoxyadenosine + L-methionine + 2 oxidized [2Fe-2S]-[ferredoxin] + S-adenosyl-L-homocysteine. It carries out the reaction adenosine(37) in tRNA + 2 reduced [2Fe-2S]-[ferredoxin] + 2 S-adenosyl-L-methionine = 2-methyladenosine(37) in tRNA + 5'-deoxyadenosine + L-methionine + 2 oxidized [2Fe-2S]-[ferredoxin] + S-adenosyl-L-homocysteine. Its function is as follows. Specifically methylates position 2 of adenine 2503 in 23S rRNA and position 2 of adenine 37 in tRNAs. m2A2503 modification seems to play a crucial role in the proofreading step occurring at the peptidyl transferase center and thus would serve to optimize ribosomal fidelity. The chain is Dual-specificity RNA methyltransferase RlmN from Methylibium petroleiphilum (strain ATCC BAA-1232 / LMG 22953 / PM1).